A 356-amino-acid polypeptide reads, in one-letter code: Golgi-resident adenosine 3',5'-bisphosphate 3'-phosphatase (356 aa).

Met1 carries the N-acetylmethionine modification. The Cytoplasmic segment spans residues 1-12 (MAPMGIRLSPLG). Residues 13–33 (VAVFFLLGLGVLYHLYSGFLA) traverse the membrane as a helical segment. At 34-356 (GRFSLFGLGS…KLPDLEKSGH (323 aa)) the chain is on the lumenal side. The disordered stretch occupies residues 84–104 (ESNVLHEKSKGKTREGADDKM). Residue Asp108 is the Proton acceptor of the active site. Glu131, Asp172, Leu174, and Asp175 together coordinate Mg(2+). Thr177 functions as the Proton acceptor in the catalytic mechanism. The AMP site is built by Ser240 and His243. Asn257 is a glycosylation site (N-linked (GlcNAc...) asparagine). AMP is bound by residues Gly266 and Lys270. Residue Asp298 coordinates Mg(2+).

It belongs to the inositol monophosphatase superfamily. Mg(2+) serves as cofactor. N-glycosylated. Contains N-linked glycan resistant to endoglycosydase H.

The protein resides in the golgi apparatus. The protein localises to the trans-Golgi network membrane. The enzyme catalyses adenosine 3',5'-bisphosphate + H2O = AMP + phosphate. It functions in the pathway sulfur metabolism. Strongly inhibited by lithium. Functionally, exhibits 3'-nucleotidase activity toward adenosine 3',5'-bisphosphate (PAP), namely hydrolyzes adenosine 3',5'-bisphosphate into adenosine 5'-monophosphate (AMP) and a phosphate. May play a role in the formation of skeletal elements derived through endochondral ossification, possibly by clearing adenosine 3',5'-bisphosphate produced by Golgi sulfotransferases during glycosaminoglycan sulfation. Has no activity toward 3'-phosphoadenosine 5'-phosphosulfate (PAPS) or inositol phosphate (IP) substrates including I(1)P, I(1,4)P2, I(1,3,4)P3, I(1,4,5)P3 and I(1,3,4,5)P4. This chain is Golgi-resident adenosine 3',5'-bisphosphate 3'-phosphatase, found in Mus musculus (Mouse).